We begin with the raw amino-acid sequence, 554 residues long: ATP synthase subunit alpha (554 aa).

172-179 contacts ATP; that stretch reads GDRKTGKT. The tract at residues 528–554 is disordered; that stretch reads LDEEELEKESVKVKKPAPEKKAKKEQK. Positions 535–554 are enriched in basic and acidic residues; sequence KESVKVKKPAPEKKAKKEQK.

The protein belongs to the ATPase alpha/beta chains family. F-type ATPases have 2 components, CF(1) - the catalytic core - and CF(0) - the membrane proton channel. CF(1) has five subunits: alpha(3), beta(3), gamma(1), delta(1), epsilon(1). CF(0) has three main subunits: a(1), b(2) and c(9-12). The alpha and beta chains form an alternating ring which encloses part of the gamma chain. CF(1) is attached to CF(0) by a central stalk formed by the gamma and epsilon chains, while a peripheral stalk is formed by the delta and b chains.

The protein localises to the cell membrane. It carries out the reaction ATP + H2O + 4 H(+)(in) = ADP + phosphate + 5 H(+)(out). In terms of biological role, produces ATP from ADP in the presence of a proton gradient across the membrane. The alpha chain is a regulatory subunit. This is ATP synthase subunit alpha from Mycolicibacterium paratuberculosis (strain ATCC BAA-968 / K-10) (Mycobacterium paratuberculosis).